A 188-amino-acid polypeptide reads, in one-letter code: dCTP deaminase (188 aa).

Residues 111–116 (KSTYAR), 135–137 (TLE), glutamine 156, tyrosine 170, and glutamine 180 each bind dCTP. The active-site Proton donor/acceptor is glutamate 137.

It belongs to the dCTP deaminase family. Homotrimer.

The enzyme catalyses dCTP + H2O + H(+) = dUTP + NH4(+). Its pathway is pyrimidine metabolism; dUMP biosynthesis; dUMP from dCTP (dUTP route): step 1/2. In terms of biological role, catalyzes the deamination of dCTP to dUTP. The polypeptide is dCTP deaminase (Polaromonas sp. (strain JS666 / ATCC BAA-500)).